Consider the following 232-residue polypeptide: Phosphatidylserine decarboxylase proenzyme (232 aa).

The Schiff-base intermediate with substrate; via pyruvic acid role is filled by Ser-190. A Pyruvic acid (Ser); by autocatalysis modification is found at Ser-190.

It belongs to the phosphatidylserine decarboxylase family. PSD-A subfamily. In terms of assembly, heterodimer of a large membrane-associated beta subunit and a small pyruvoyl-containing alpha subunit. Pyruvate serves as cofactor. Post-translationally, is synthesized initially as an inactive proenzyme. Formation of the active enzyme involves a self-maturation process in which the active site pyruvoyl group is generated from an internal serine residue via an autocatalytic post-translational modification. Two non-identical subunits are generated from the proenzyme in this reaction, and the pyruvate is formed at the N-terminus of the alpha chain, which is derived from the carboxyl end of the proenzyme. The post-translation cleavage follows an unusual pathway, termed non-hydrolytic serinolysis, in which the side chain hydroxyl group of the serine supplies its oxygen atom to form the C-terminus of the beta chain, while the remainder of the serine residue undergoes an oxidative deamination to produce ammonia and the pyruvoyl prosthetic group on the alpha chain.

It localises to the cell membrane. It catalyses the reaction a 1,2-diacyl-sn-glycero-3-phospho-L-serine + H(+) = a 1,2-diacyl-sn-glycero-3-phosphoethanolamine + CO2. It participates in phospholipid metabolism; phosphatidylethanolamine biosynthesis; phosphatidylethanolamine from CDP-diacylglycerol: step 2/2. Catalyzes the formation of phosphatidylethanolamine (PtdEtn) from phosphatidylserine (PtdSer). In Agrobacterium fabrum (strain C58 / ATCC 33970) (Agrobacterium tumefaciens (strain C58)), this protein is Phosphatidylserine decarboxylase proenzyme.